Here is a 588-residue protein sequence, read N- to C-terminus: Glutathione/L-cysteine transport system ATP-binding/permease protein CydD (588 aa).

The Cytoplasmic segment spans residues 1–15 (MNKSRQKELTRWLKQ). 2 helical membrane-spanning segments follow: residues 16 to 36 (QSVI…VSGI) and 37 to 57 (LIIA…MENI). The ABC transmembrane type-1 domain maps to 20 to 306 (SQRWLNISRL…APEFFQPLRD (287 aa)). The Cytoplasmic segment spans residues 58-136 (PREALLLPFT…LEQIDDMHDY (79 aa)). A helical transmembrane segment spans residues 137 to 157 (YARYLPQMALAVSVPLLIVVA). Topologically, residues 158–161 (IFPS) are periplasmic. The chain crosses the membrane as a helical span at residues 162–182 (NWAAALILLGTAPLIPLFMAL). At 183-249 (VGMGAADANR…MEVLRLAFLS (67 aa)) the chain is on the cytoplasmic side. The helical transmembrane segment at 250–270 (SGILEFFTSLSIALVAVYFGF) threads the bilayer. The Periplasmic portion of the chain corresponds to 271 to 276 (SYLGEL). Residues 277-297 (DFGHYDTGVTLAAGFLALILA) form a helical membrane-spanning segment. At 298 to 573 (PEFFQPLRDL…QGRYAELSVA (276 aa)) the chain is on the cytoplasmic side. The region spanning 339-572 (EAELASTDPV…EQGRYAELSV (234 aa)) is the ABC transporter domain. Position 373-380 (373-380 (LPAGQRAV)) interacts with ATP.

This sequence belongs to the ABC transporter superfamily. Cysteine exporter (TC 3.A.1.129.1) family. In terms of assembly, forms a heterodimer with CydC.

The protein resides in the cell inner membrane. The catalysed reaction is L-cysteine(in) + ATP + H2O = L-cysteine(out) + ADP + phosphate + H(+). It catalyses the reaction glutathione(in) + ATP + H2O = glutathione(out) + ADP + phosphate + H(+). With respect to regulation, ATPase activity is stimulated by various thiol compounds. The presence of heme leads to a further enhancement of thiol-stimulated ATPase activity, although a large excess of heme inhibits activity. Glutathione transport is inhibited by sodium orthovanadate, an inhibitor of ABC-type transport systems, but not by the proton ionophore carbonyl cyanide m-chlorophenylhydrazone (CCCP). Functionally, part of the ABC transporter complex CydDC that exports the reduced low-molecular-weight thiols cysteine and glutathione to the periplasm. Export of these thiol-containing redox-active molecules may be crucial for redox homeostasis in the periplasm, permitting correct assembly of various respiratory complexes and formation of correct disulfide bonds in periplasmic and secreted proteins. CydD contains transmembrane domains (TMD), which form a pore in the inner membrane, and an ATP-binding domain (NBD), which is responsible for energy generation. Required for the assembly of functional cytochrome bd-type quinol oxidases and periplasmic c-type cytochromes. Overexpression of CydDC under anaerobic conditions also results in the formation of a heme biosynthesis-derived pigment, P-574. CydDC binds heme b, but heme is probably not transported by the complex and instead has a role in regulating ATPase activity. In terms of biological role, conversely, a more recent study suggests an alternative function of CydDC: authors suggest that CydDC does not mediate the export of L-cysteine but rather reduces cytoplasmic L-cystine to L-cysteine. The principle function of CydDC would be to maintain the reduced state of cytoplasmic L-cysteine, thereby providing an important connection between sulfur metabolism, oxidative stress and resistance to antibiotics. The sequence is that of Glutathione/L-cysteine transport system ATP-binding/permease protein CydD from Escherichia coli (strain K12).